Here is a 174-residue protein sequence, read N- to C-terminus: 3-hydroxyanthranilate 3,4-dioxygenase (174 aa).

Residue Arg-47 coordinates O2. Fe cation contacts are provided by His-51, Glu-57, and His-95. Glu-57 is a substrate binding site. Residues Arg-99 and Glu-110 each contribute to the substrate site. 4 residues coordinate Fe cation: Cys-125, Cys-128, Cys-162, and Cys-165.

Belongs to the 3-HAO family. As to quaternary structure, homodimer. Fe(2+) is required as a cofactor.

It carries out the reaction 3-hydroxyanthranilate + O2 = (2Z,4Z)-2-amino-3-carboxymuconate 6-semialdehyde. Its pathway is cofactor biosynthesis; NAD(+) biosynthesis; quinolinate from L-kynurenine: step 3/3. In terms of biological role, catalyzes the oxidative ring opening of 3-hydroxyanthranilate to 2-amino-3-carboxymuconate semialdehyde, which spontaneously cyclizes to quinolinate. The protein is 3-hydroxyanthranilate 3,4-dioxygenase of Burkholderia lata (strain ATCC 17760 / DSM 23089 / LMG 22485 / NCIMB 9086 / R18194 / 383).